Here is a 453-residue protein sequence, read N- to C-terminus: Aldehyde dehydrogenase, dimeric NADP-preferring (453 aa).

At S2 the chain carries N-acetylserine. K178 is modified (N6-acetyllysine). 188–193 contributes to the NAD(+) binding site; the sequence is GSTAVG. K194 is modified (N6-acetyllysine). Active-site residues include E210 and C244.

It belongs to the aldehyde dehydrogenase family. As to quaternary structure, homodimer.

It is found in the cytoplasm. It catalyses the reaction an aldehyde + NAD(+) + H2O = a carboxylate + NADH + 2 H(+). It carries out the reaction octanal + NAD(+) + H2O = octanoate + NADH + 2 H(+). ALDHs play a major role in the detoxification of alcohol-derived acetaldehyde. They are involved in the metabolism of corticosteroids, biogenic amines, neurotransmitters, and lipid peroxidation. Oxidizes medium and long chain aldehydes into non-toxic fatty acids. Preferentially oxidizes aromatic aldehyde substrates. Comprises about 50 percent of corneal epithelial soluble proteins. May play a role in preventing corneal damage caused by ultraviolet light. In Rattus norvegicus (Rat), this protein is Aldehyde dehydrogenase, dimeric NADP-preferring (Aldh3a1).